The following is a 416-amino-acid chain: tRNA(Met) cytidine acetate ligase (416 aa).

Residues 7–20, glycine 102, asparagine 166, and arginine 191 contribute to the ATP site; that span reads VAEY…HLYL.

This sequence belongs to the TmcAL family.

Its subcellular location is the cytoplasm. The enzyme catalyses cytidine(34) in elongator tRNA(Met) + acetate + ATP = N(4)-acetylcytidine(34) in elongator tRNA(Met) + AMP + diphosphate. Its function is as follows. Catalyzes the formation of N(4)-acetylcytidine (ac(4)C) at the wobble position of elongator tRNA(Met), using acetate and ATP as substrates. First activates an acetate ion to form acetyladenylate (Ac-AMP) and then transfers the acetyl group to tRNA to form ac(4)C34. This chain is tRNA(Met) cytidine acetate ligase, found in Syntrophomonas wolfei subsp. wolfei (strain DSM 2245B / Goettingen).